We begin with the raw amino-acid sequence, 153 residues long: MSVTIHTKPFGTIQVDSKQILKFPQGLLGFEEFDEYALIEESAESPFKWLQSTKESGLAFIVIQPELFMNQYKPAISDEELHDIGLTSWKDGIIFLIVTIPHDNPKGMTANLQGPIILNGKEGKGKQCISRDENHSIRKNIIESMEEMSSEKV.

This sequence belongs to the FliW family. As to quaternary structure, interacts with translational regulator CsrA and flagellin(s).

It is found in the cytoplasm. Functionally, acts as an anti-CsrA protein, binds CsrA and prevents it from repressing translation of its target genes, one of which is flagellin. Binds to flagellin and participates in the assembly of the flagellum. The polypeptide is Flagellar assembly factor FliW (Leptospira biflexa serovar Patoc (strain Patoc 1 / Ames)).